The following is a 311-amino-acid chain: Olfactory receptor 2Y1 (311 aa).

Residues 1 to 25 lie on the Extracellular side of the membrane; the sequence is MGSFNTSFEDGFILVGFSDWPQLEP. N-linked (GlcNAc...) asparagine glycosylation occurs at Asn5. A helical transmembrane segment spans residues 26 to 49; sequence ILFVFIFIFYSLTLFGNTIIIALS. Residues 50 to 57 lie on the Cytoplasmic side of the membrane; that stretch reads WLDLRLHT. The chain crosses the membrane as a helical span at residues 58–79; sequence PMYFFLSHLSLLDLCFTTSTVP. Residues 80–100 are Extracellular-facing; the sequence is QLLINLCGVDRTITRGGCVAQ. Cys97 and Cys188 form a disulfide bridge. A helical transmembrane segment spans residues 101–120; that stretch reads LFIYLALGSTECVLLVVMAF. Residues 121 to 139 lie on the Cytoplasmic side of the membrane; the sequence is DRYAAVCRPLHYMAIMHPH. The helical transmembrane segment at 140–158 threads the bilayer; that stretch reads LCQTLAIASWGAGFVNSLI. The Extracellular portion of the chain corresponds to 159-194; sequence QTGLAMAMPLCGHRLNHFFCEMPVFLKLACADTEGT. Residues 195–218 form a helical membrane-spanning segment; it reads EAKMFVARVIVVAVPAALILGSYV. The Cytoplasmic segment spans residues 219-235; that stretch reads HIAHAVLRVKSTAGRRK. Residues 236–258 traverse the membrane as a helical segment; that stretch reads AFGTCGSHLLVVFLFYGSAIYTY. Residues 259 to 271 lie on the Extracellular side of the membrane; that stretch reads LQSIHNYSEREGK. Asn264 carries an N-linked (GlcNAc...) asparagine glycan. The chain crosses the membrane as a helical span at residues 272-291; it reads FVALFYTIITPILNPLIYTL. Residues 292-311 lie on the Cytoplasmic side of the membrane; the sequence is RNKDVKGALWKVLWRGRDSG.

Belongs to the G-protein coupled receptor 1 family.

The protein localises to the cell membrane. Its function is as follows. Odorant receptor. The chain is Olfactory receptor 2Y1 (OR2Y1) from Homo sapiens (Human).